Here is a 706-residue protein sequence, read N- to C-terminus: Glycylpeptide N-tetradecanoyltransferase (706 aa).

The disordered stretch occupies residues Met1–Lys119. Positions Thr7–Pro42 are enriched in low complexity. The span at Glu47 to Gly65 shows a compositional bias: acidic residues. The span at Lys78–Leu95 shows a compositional bias: basic residues. Tetradecanoyl-CoA-binding positions include His180–Trp183, Leu317–Val319, and Ser325–Ala329. Val706 serves as the catalytic Proton acceptor; via carboxylate.

Belongs to the NMT family. Monomer.

The protein localises to the cytoplasm. It catalyses the reaction N-terminal glycyl-[protein] + tetradecanoyl-CoA = N-tetradecanoylglycyl-[protein] + CoA + H(+). Its function is as follows. Adds a myristoyl group to the N-terminal glycine residue of certain cellular proteins. The polypeptide is Glycylpeptide N-tetradecanoyltransferase (NMT1) (Mycosarcoma maydis (Corn smut fungus)).